Consider the following 128-residue polypeptide: Prefoldin subunit 1 (128 aa).

2 coiled-coil regions span residues 17–37 (MIEL…KEGD) and 81–115 (LKDS…LLQQ).

The protein belongs to the prefoldin subunit beta family. Heterohexamer of two PFD-alpha type and four PFD-beta type subunits forming prefoldin co-chaperone complex. Interacts with LSM8, a specific subunit of the LSM2-8 complex, which is a core component of the spliceosome.

Its subcellular location is the cytoplasm. The protein localises to the nucleus. Functionally, binds specifically to cytosolic chaperonin (c-CPN) and transfers target proteins to it. Binds to nascent polypeptide chain and promotes folding in an environment in which there are many competing pathways for nonnative proteins. Together with other chaperonins, contribute to the regulation of gene expression by modulating the spliceosome function on pre-mRNA splicing post-transcriptionally by acting as a co-chaperone of Hsp90 to control levels of LSM8. Required for microtubules (MTs) organization and dynamicity. Involved in the process leading to microtubules dissociation in response to gibberellic acid (GA) probably due to the DELLA proteins-mediated translocation of the prefoldin co-chaperone complex from the cytoplasm to the nucleus. This Arabidopsis thaliana (Mouse-ear cress) protein is Prefoldin subunit 1.